Reading from the N-terminus, the 971-residue chain is Exportin-2 (971 aa).

The region spanning 29–102 (AEKYLESVEG…KSSIINLMLR (74 aa)) is the Importin N-terminal domain.

It belongs to the XPO2/CSE1 family.

The protein resides in the cytoplasm. It localises to the nucleus. Export receptor for importin alpha. Mediates importin-alpha re-export from the nucleus to the cytoplasm after import substrates have been released into the nucleoplasm. This chain is Exportin-2 (cse1l), found in Xenopus laevis (African clawed frog).